Here is a 514-residue protein sequence, read N- to C-terminus: Lysine--tRNA ligase (514 aa).

2 residues coordinate Mg(2+): Glu424 and Glu431.

Belongs to the class-II aminoacyl-tRNA synthetase family. In terms of assembly, homodimer. Mg(2+) is required as a cofactor.

It is found in the cytoplasm. It catalyses the reaction tRNA(Lys) + L-lysine + ATP = L-lysyl-tRNA(Lys) + AMP + diphosphate. This chain is Lysine--tRNA ligase, found in Cupriavidus necator (strain ATCC 17699 / DSM 428 / KCTC 22496 / NCIMB 10442 / H16 / Stanier 337) (Ralstonia eutropha).